The sequence spans 560 residues: Probable sulfate transporter Rv1739c (560 aa).

A required for sulfate transport in E.coli region spans residues 1–436; that stretch reads MIPTMTSAGW…VLGFVPGIAG (436 aa). The next 11 membrane-spanning stretches (helical) occupy residues 29–49, 51–71, 79–99, 105–125, 138–158, 184–204, 207–227, 256–276, 333–353, 355–375, and 394–414; these read VLAG…YATV, GLPP…YALL, IGPE…MAAG, AVLA…AGTA, VLVG…LGTI, WPTF…TRWA, APGP…MSLD, ALII…VLTA, LIAL…LAMF, IAAL…LSEF, and AAVL…LSIL. The 116-residue stretch at 442–557 folds into the STAS domain; it reads DYPQAKRVPG…MTLPTAVQAF (116 aa).

Belongs to the SLC26A/SulP transporter (TC 2.A.53) family.

It localises to the cell membrane. Functionally, expression in E.coli induces sulfate uptake during early- to mid-log phase growth. Uptake is maximal at pH 6.0, is sulfate-specific, requires E.coli CysA and the transmembrane segment but not the STAS domain of the protein. The protein is Probable sulfate transporter Rv1739c of Mycobacterium tuberculosis (strain ATCC 25618 / H37Rv).